We begin with the raw amino-acid sequence, 554 residues long: CTP synthase (554 aa).

The amidoligase domain stretch occupies residues 1-265; the sequence is MTPLIFVTGG…DEIVVNQLKL (265 aa). S13 lines the CTP pocket. S13 contacts UTP. ATP is bound at residue 14-19; it reads SLGKGI. Mg(2+) contacts are provided by D71 and E139. CTP is bound by residues 146-148, 186-191, and K222; these read DIE and KTKPTQ. UTP is bound by residues 186–191 and K222; that span reads KTKPTQ. A Glutamine amidotransferase type-1 domain is found at 292–545; the sequence is TIAVVGKYVD…IRAARERKAG (254 aa). G353 provides a ligand contact to L-glutamine. The active-site Nucleophile; for glutamine hydrolysis is C380. L-glutamine is bound by residues 381 to 384, E404, and R471; that span reads YGMQ. Active-site residues include H518 and E520.

The protein belongs to the CTP synthase family. In terms of assembly, homotetramer.

The catalysed reaction is UTP + L-glutamine + ATP + H2O = CTP + L-glutamate + ADP + phosphate + 2 H(+). It carries out the reaction L-glutamine + H2O = L-glutamate + NH4(+). The enzyme catalyses UTP + NH4(+) + ATP = CTP + ADP + phosphate + 2 H(+). Its pathway is pyrimidine metabolism; CTP biosynthesis via de novo pathway; CTP from UDP: step 2/2. Its activity is regulated as follows. Allosterically activated by GTP, when glutamine is the substrate; GTP has no effect on the reaction when ammonia is the substrate. The allosteric effector GTP functions by stabilizing the protein conformation that binds the tetrahedral intermediate(s) formed during glutamine hydrolysis. Inhibited by the product CTP, via allosteric rather than competitive inhibition. Catalyzes the ATP-dependent amination of UTP to CTP with either L-glutamine or ammonia as the source of nitrogen. Regulates intracellular CTP levels through interactions with the four ribonucleotide triphosphates. In Stenotrophomonas maltophilia (strain K279a), this protein is CTP synthase.